Reading from the N-terminus, the 294-residue chain is tRNA dimethylallyltransferase (294 aa).

An ATP-binding site is contributed by 10–17; that stretch reads GPTAVGKT. 12-17 is a binding site for substrate; it reads TAVGKT. Positions 35–38 are interaction with substrate tRNA; that stretch reads DSQQ.

It belongs to the IPP transferase family. Monomer. Requires Mg(2+) as cofactor.

The catalysed reaction is adenosine(37) in tRNA + dimethylallyl diphosphate = N(6)-dimethylallyladenosine(37) in tRNA + diphosphate. In terms of biological role, catalyzes the transfer of a dimethylallyl group onto the adenine at position 37 in tRNAs that read codons beginning with uridine, leading to the formation of N6-(dimethylallyl)adenosine (i(6)A). This chain is tRNA dimethylallyltransferase, found in Streptococcus pneumoniae serotype 19F (strain G54).